Here is an 89-residue protein sequence, read N- to C-terminus: Small ribosomal subunit protein uS15 (89 aa).

Belongs to the universal ribosomal protein uS15 family. Part of the 30S ribosomal subunit. Forms a bridge to the 50S subunit in the 70S ribosome, contacting the 23S rRNA.

In terms of biological role, one of the primary rRNA binding proteins, it binds directly to 16S rRNA where it helps nucleate assembly of the platform of the 30S subunit by binding and bridging several RNA helices of the 16S rRNA. Functionally, forms an intersubunit bridge (bridge B4) with the 23S rRNA of the 50S subunit in the ribosome. The polypeptide is Small ribosomal subunit protein uS15 (Aeromonas hydrophila subsp. hydrophila (strain ATCC 7966 / DSM 30187 / BCRC 13018 / CCUG 14551 / JCM 1027 / KCTC 2358 / NCIMB 9240 / NCTC 8049)).